We begin with the raw amino-acid sequence, 147 residues long: Basic phospholipase A2 beta-bungarotoxin A1 chain (147 aa).

The N-terminal stretch at M1–A19 is a signal peptide. The propeptide occupies A20–L27. 6 disulfides stabilise this stretch: C54–C146, C56–C72, C71–C127, C78–C120, C88–C113, and C106–C118. Y55, G57, and G59 together coordinate Ca(2+). H75 is a catalytic residue. Residue D76 coordinates Ca(2+). D121 is an active-site residue.

The protein belongs to the phospholipase A2 family. Group I subfamily. D49 sub-subfamily. Heterodimer; disulfide-linked. The A chains have phospholipase A2 activity and the B chains show homology with the basic protease inhibitors. The A1 chain is found in beta-1 and beta-2 bungarotoxins. The cofactor is Ca(2+). In terms of tissue distribution, expressed by the venom gland.

Its subcellular location is the secreted. The enzyme catalyses a 1,2-diacyl-sn-glycero-3-phosphocholine + H2O = a 1-acyl-sn-glycero-3-phosphocholine + a fatty acid + H(+). Functionally, snake venom phospholipase A2 (PLA2) that inhibits neuromuscular transmission by blocking acetylcholine release from the nerve termini. PLA2 catalyzes the calcium-dependent hydrolysis of the 2-acyl groups in 3-sn-phosphoglycerides. This Bungarus multicinctus (Many-banded krait) protein is Basic phospholipase A2 beta-bungarotoxin A1 chain.